The sequence spans 321 residues: Ferredoxin--NADP reductase (321 aa).

Residues glutamate 33, glutamine 41, tyrosine 46, valine 86, leucine 119, aspartate 277, and serine 318 each coordinate FAD.

Belongs to the ferredoxin--NADP reductase type 2 family. In terms of assembly, homodimer. The cofactor is FAD.

It carries out the reaction 2 reduced [2Fe-2S]-[ferredoxin] + NADP(+) + H(+) = 2 oxidized [2Fe-2S]-[ferredoxin] + NADPH. This Lactococcus lactis subsp. lactis (strain IL1403) (Streptococcus lactis) protein is Ferredoxin--NADP reductase.